Here is a 272-residue protein sequence, read N- to C-terminus: L-aspartate dehydrogenase 3 (272 aa).

Positions 126 and 194 each coordinate NAD(+). The active site involves His-224.

This sequence belongs to the L-aspartate dehydrogenase family.

The enzyme catalyses L-aspartate + NADP(+) + H2O = oxaloacetate + NH4(+) + NADPH + H(+). It carries out the reaction L-aspartate + NAD(+) + H2O = oxaloacetate + NH4(+) + NADH + H(+). Its pathway is cofactor biosynthesis; NAD(+) biosynthesis; iminoaspartate from L-aspartate (dehydrogenase route): step 1/1. Specifically catalyzes the NAD or NADP-dependent dehydrogenation of L-aspartate to iminoaspartate. The sequence is that of L-aspartate dehydrogenase 3 from Bordetella bronchiseptica (strain ATCC BAA-588 / NCTC 13252 / RB50) (Alcaligenes bronchisepticus).